Here is a 247-residue protein sequence, read N- to C-terminus: UDP-2,3-diacylglucosamine hydrolase (247 aa).

Asp8, His10, Asp41, Asn79, and His114 together coordinate Mn(2+). 79 to 80 (NR) contacts substrate. Substrate-binding residues include Asp122, Ser160, Asp171, Asn174, and His202. 2 residues coordinate Mn(2+): His202 and His204.

This sequence belongs to the LpxH family. Requires Mn(2+) as cofactor.

The protein localises to the cell inner membrane. The catalysed reaction is UDP-2-N,3-O-bis[(3R)-3-hydroxytetradecanoyl]-alpha-D-glucosamine + H2O = 2-N,3-O-bis[(3R)-3-hydroxytetradecanoyl]-alpha-D-glucosaminyl 1-phosphate + UMP + 2 H(+). It functions in the pathway glycolipid biosynthesis; lipid IV(A) biosynthesis; lipid IV(A) from (3R)-3-hydroxytetradecanoyl-[acyl-carrier-protein] and UDP-N-acetyl-alpha-D-glucosamine: step 4/6. Its function is as follows. Hydrolyzes the pyrophosphate bond of UDP-2,3-diacylglucosamine to yield 2,3-diacylglucosamine 1-phosphate (lipid X) and UMP by catalyzing the attack of water at the alpha-P atom. Involved in the biosynthesis of lipid A, a phosphorylated glycolipid that anchors the lipopolysaccharide to the outer membrane of the cell. In Xanthomonas oryzae pv. oryzae (strain MAFF 311018), this protein is UDP-2,3-diacylglucosamine hydrolase.